Here is a 485-residue protein sequence, read N- to C-terminus: tRNA-2-methylthio-N(6)-dimethylallyladenosine synthase (485 aa).

The MTTase N-terminal domain occupies 37 to 154; sequence GKLYIKTHGC…LPELIRARRE (118 aa). Positions 46, 83, 117, 191, 195, and 198 each coordinate [4Fe-4S] cluster. The Radical SAM core domain maps to 177–416; that stretch reads RADGPSAFVS…HINAHAAGIS (240 aa). The TRAM domain maps to 417-480; the sequence is QRMVGSVQRV…SNSLRGRIQL (64 aa).

Belongs to the methylthiotransferase family. MiaB subfamily. As to quaternary structure, monomer. [4Fe-4S] cluster is required as a cofactor.

Its subcellular location is the cytoplasm. The enzyme catalyses N(6)-dimethylallyladenosine(37) in tRNA + (sulfur carrier)-SH + AH2 + 2 S-adenosyl-L-methionine = 2-methylsulfanyl-N(6)-dimethylallyladenosine(37) in tRNA + (sulfur carrier)-H + 5'-deoxyadenosine + L-methionine + A + S-adenosyl-L-homocysteine + 2 H(+). Functionally, catalyzes the methylthiolation of N6-(dimethylallyl)adenosine (i(6)A), leading to the formation of 2-methylthio-N6-(dimethylallyl)adenosine (ms(2)i(6)A) at position 37 in tRNAs that read codons beginning with uridine. In Xanthomonas campestris pv. campestris (strain 8004), this protein is tRNA-2-methylthio-N(6)-dimethylallyladenosine synthase.